The following is a 650-amino-acid chain: SUMO-activating enzyme subunit 2 (650 aa).

Residues 25-30 (GAGGIG), Asp-49, 57-60 (NLNR), Lys-73, 96-97 (SI), and 118-123 (DNRAAR) contribute to the ATP site. Cys-159 and Cys-162 together coordinate Zn(2+). Cys-174 functions as the Glycyl thioester intermediate in the catalytic mechanism. Residue Lys-191 forms a Glycyl lysine isopeptide (Lys-Gly) (interchain with G-Cter in SUMO) linkage. A Glycyl lysine isopeptide (Lys-Gly) (interchain with G-Cter in SUMO1) cross-link involves residue Lys-237. Glycyl lysine isopeptide (Lys-Gly) (interchain with G-Cter in SUMO) cross-links involve residues Lys-258, Lys-282, and Lys-286. Zn(2+) contacts are provided by Cys-446 and Cys-449. Residues 554 to 650 (DAPDKAPAPS…DDDEDIIALD (97 aa)) are disordered. A compositionally biased stretch (polar residues) spans 572–586 (ANGNKDSAQPSTSSK). Residues 590-603 (EDDDVLLVDSDEEP) show a composition bias toward acidic residues. The residue at position 599 (Ser-599) is a Phosphoserine. Glycyl lysine isopeptide (Lys-Gly) (interchain with G-Cter in SUMO) cross-links involve residues Lys-618 and Lys-630. Acidic residues predominate over residues 638–650 (PADDDDEDIIALD).

It belongs to the ubiquitin-activating E1 family. In terms of assembly, heterodimer of sae1 and uba2/sae2. The heterodimer corresponds to the two domains that are encoded on a single polypeptide chain in ubiquitin-activating enzyme E1. Interacts with ube2i. In terms of processing, sumoylated with SUMO1 and SUMO2/3 and by UBC9. Sumoylation at Lys-237 inhibits enzymatic activity. Sumoylation at the C-terminal lysine cluster plays an essential role in nuclear trafficking. In terms of tissue distribution, expressed in eye, brain and pectoral fins.

Its subcellular location is the cytoplasm. The protein resides in the nucleus. It functions in the pathway protein modification; protein sumoylation. Its function is as follows. The heterodimer acts as an E1 ligase for sumo1, sumo2, and sumo3. It mediates ATP-dependent activation of sumo proteins followed by formation of a thioester bond between a sumo protein and a conserved active site cysteine residue on uba2/sae2. In Danio rerio (Zebrafish), this protein is SUMO-activating enzyme subunit 2 (uba2).